Consider the following 342-residue polypeptide: N-acetyl-gamma-glutamyl-phosphate reductase (342 aa).

The active site involves Cys-149.

It belongs to the NAGSA dehydrogenase family. Type 1 subfamily.

It is found in the cytoplasm. It carries out the reaction N-acetyl-L-glutamate 5-semialdehyde + phosphate + NADP(+) = N-acetyl-L-glutamyl 5-phosphate + NADPH + H(+). It functions in the pathway amino-acid biosynthesis; L-arginine biosynthesis; N(2)-acetyl-L-ornithine from L-glutamate: step 3/4. Functionally, catalyzes the NADPH-dependent reduction of N-acetyl-5-glutamyl phosphate to yield N-acetyl-L-glutamate 5-semialdehyde. The polypeptide is N-acetyl-gamma-glutamyl-phosphate reductase (Nitrosospira multiformis (strain ATCC 25196 / NCIMB 11849 / C 71)).